Reading from the N-terminus, the 256-residue chain is MKRFAVVTLFPDAIDCWLQASVVGRARGRAFDVLYVNPRDFAKDRYRSVDDYMFGGGPGMLMRYDVLKPALDHAKILVQNPLVLALSAGGKVLNQEMCTILSSYEGDIVLLCGHYEGMDDRIFDHVDLEVSVGDYVLSGGELGAAVIMETVIRLLPGFVEKSDNVRKESFTNNLLEEPQFTRPREYEGKEVPEVLLSGHHQRIELWKKEQRIKRTLVQRPDLLTSAKLEPMDLQILRRVLTDMEKVKRAIFGEQSN.

S-adenosyl-L-methionine is bound by residues Gly-113 and 132 to 137; that span reads VGDYVL.

The protein belongs to the RNA methyltransferase TrmD family. Homodimer.

It is found in the cytoplasm. It carries out the reaction guanosine(37) in tRNA + S-adenosyl-L-methionine = N(1)-methylguanosine(37) in tRNA + S-adenosyl-L-homocysteine + H(+). Specifically methylates guanosine-37 in various tRNAs. The chain is tRNA (guanine-N(1)-)-methyltransferase from Coprothermobacter proteolyticus (strain ATCC 35245 / DSM 5265 / OCM 4 / BT).